Here is a 274-residue protein sequence, read N- to C-terminus: Large ribosomal subunit protein uL2 (274 aa).

A disordered region spans residues 223–274 (VAMNPVDHPHGGGEGRTSGGRHPVSPWGMPTKGFKTRKNKSTDKYIVRRRNK).

This sequence belongs to the universal ribosomal protein uL2 family. As to quaternary structure, part of the 50S ribosomal subunit. Forms a bridge to the 30S subunit in the 70S ribosome.

Functionally, one of the primary rRNA binding proteins. Required for association of the 30S and 50S subunits to form the 70S ribosome, for tRNA binding and peptide bond formation. It has been suggested to have peptidyltransferase activity; this is somewhat controversial. Makes several contacts with the 16S rRNA in the 70S ribosome. The sequence is that of Large ribosomal subunit protein uL2 from Aliivibrio fischeri (strain ATCC 700601 / ES114) (Vibrio fischeri).